Here is a 201-residue protein sequence, read N- to C-terminus: Proteasome subunit beta type-2 (201 aa).

Met1 is subject to N-acetylmethionine.

It belongs to the peptidase T1B family. As to quaternary structure, the 26S proteasome consists of a 20S proteasome core and two 19S regulatory subunits. The 20S proteasome core is a barrel-shaped complex made of 28 subunits that are arranged in four stacked rings. The two outer rings are each formed by seven alpha subunits, and the two inner rings are formed by seven beta subunits. The proteolytic activity is exerted by three beta-subunits PSMB5, PSMB6 and PSMB7. (Microbial infection) Interacts with HIV-1 protein Tat.

It is found in the cytoplasm. Its subcellular location is the nucleus. Functionally, non-catalytic component of the 20S core proteasome complex involved in the proteolytic degradation of most intracellular proteins. This complex plays numerous essential roles within the cell by associating with different regulatory particles. Associated with two 19S regulatory particles, forms the 26S proteasome and thus participates in the ATP-dependent degradation of ubiquitinated proteins. The 26S proteasome plays a key role in the maintenance of protein homeostasis by removing misfolded or damaged proteins that could impair cellular functions, and by removing proteins whose functions are no longer required. Associated with the PA200 or PA28, the 20S proteasome mediates ubiquitin-independent protein degradation. This type of proteolysis is required in several pathways including spermatogenesis (20S-PA200 complex) or generation of a subset of MHC class I-presented antigenic peptides (20S-PA28 complex). In Homo sapiens (Human), this protein is Proteasome subunit beta type-2.